The primary structure comprises 640 residues: 1-deoxy-D-xylulose-5-phosphate synthase (640 aa).

Residues His72 and 113–115 (GHA) each bind thiamine diphosphate. Asp144 is a Mg(2+) binding site. Residues 145 to 146 (GA), Asn174, Tyr287, and Glu370 each bind thiamine diphosphate. Residue Asn174 participates in Mg(2+) binding.

Belongs to the transketolase family. DXPS subfamily. As to quaternary structure, homodimer. Mg(2+) is required as a cofactor. The cofactor is thiamine diphosphate.

It catalyses the reaction D-glyceraldehyde 3-phosphate + pyruvate + H(+) = 1-deoxy-D-xylulose 5-phosphate + CO2. The protein operates within metabolic intermediate biosynthesis; 1-deoxy-D-xylulose 5-phosphate biosynthesis; 1-deoxy-D-xylulose 5-phosphate from D-glyceraldehyde 3-phosphate and pyruvate: step 1/1. Its function is as follows. Catalyzes the acyloin condensation reaction between C atoms 2 and 3 of pyruvate and glyceraldehyde 3-phosphate to yield 1-deoxy-D-xylulose-5-phosphate (DXP). This is 1-deoxy-D-xylulose-5-phosphate synthase from Synechocystis sp. (strain ATCC 27184 / PCC 6803 / Kazusa).